The following is a 202-amino-acid chain: D-alanyl-D-alanine dipeptidase (202 aa).

Zn(2+) is bound by residues His116 and Asp123. The active-site Proton donor/acceptor is Glu181. His184 provides a ligand contact to Zn(2+).

Belongs to the peptidase M15D family. Zn(2+) is required as a cofactor.

The enzyme catalyses D-alanyl-D-alanine + H2O = 2 D-alanine. Functionally, catalyzes hydrolysis of the D-alanyl-D-alanine dipeptide. The protein is D-alanyl-D-alanine dipeptidase (vanXB) of Enterococcus faecalis (strain ATCC 700802 / V583).